The sequence spans 918 residues: Probable lipoxygenase 6 (918 aa).

A disordered region spans residues 56-76 (AASPSSGIKGGGAGERRPAPE). Residues 90–218 (QKEDIKEAVA…ELPTKRVFFS (129 aa)) enclose the PLAT domain. One can recognise a Lipoxygenase domain in the interval 221–918 (PYLPSETPPG…CRGVPNSISI (698 aa)). Residues histidine 573, histidine 578, histidine 765, asparagine 769, and isoleucine 918 each coordinate Fe cation.

This sequence belongs to the lipoxygenase family. Fe cation is required as a cofactor.

It catalyses the reaction (9Z,12Z)-octadecadienoate + O2 = (13S)-hydroperoxy-(9Z,11E)-octadecadienoate. It carries out the reaction (9Z,12Z,15Z)-octadecatrienoate + O2 = (13S)-hydroperoxy-(9Z,11E,15Z)-octadecatrienoate. It participates in lipid metabolism; oxylipin biosynthesis. Its function is as follows. Plant lipoxygenase may be involved in a number of diverse aspects of plant physiology including growth and development, pest resistance, and senescence or responses to wounding. Catalyzes the hydroperoxidation of lipids containing a cis,cis-1,4-pentadiene structure. This chain is Probable lipoxygenase 6, found in Oryza sativa subsp. japonica (Rice).